A 304-amino-acid polypeptide reads, in one-letter code: Putative HTH-type transcriptional regulatory protein Memar_2347 (304 aa).

An HTH cro/C1-type domain is found at 132–189 (LREVRERFRMSLGDLASHLGVSRRTISKYESGMGTTLDVAIKLEEIFNAPLVETIELL). Residues 143-162 (LGDLASHLGVSRRTISKYES) constitute a DNA-binding region (H-T-H motif).

The polypeptide is Putative HTH-type transcriptional regulatory protein Memar_2347 (Methanoculleus marisnigri (strain ATCC 35101 / DSM 1498 / JR1)).